We begin with the raw amino-acid sequence, 935 residues long: Protocadherin gamma-A11 (935 aa).

The N-terminal stretch at 1–29 (MANRLQRGDRSRLLLLLCIFLGTLRGFRA) is a signal peptide. 6 Cadherin domains span residues 30–134 (RQIR…APSF), 135–243 (QEDE…IPMF), 244–348 (TQSV…APEI), 349–453 (TITS…PPVF), 454–563 (PHSS…APEI), and 571–677 (DGST…ADLG). The Extracellular segment spans residues 30–693 (RQIRYSVPEE…NSETSDLSLY (664 aa)). Asparagine 48 carries an N-linked (GlcNAc...) asparagine glycan. Residues asparagine 255, asparagine 266, asparagine 420, and asparagine 546 are each glycosylated (N-linked (GlcNAc...) asparagine). A helical membrane pass occupies residues 694–714 (LVVAVAAVSCIFLVFVIVLLA). Topologically, residues 715-935 (LRLWRWHKSR…KKKSGKKEKK (221 aa)) are cytoplasmic. 2 disordered regions span residues 805-844 (CDPT…WPNN) and 905-935 (ATLT…KEKK). Residues 807–844 (PTSNQQAPPNTDWRFSQAQRPGTSGSQNGDDTGTWPNN) are compositionally biased toward polar residues. The segment covering 925 to 935 (NKKKSGKKEKK) has biased composition (basic residues).

It localises to the cell membrane. Functionally, potential calcium-dependent cell-adhesion protein. May be involved in the establishment and maintenance of specific neuronal connections in the brain. In Homo sapiens (Human), this protein is Protocadherin gamma-A11 (PCDHGA11).